The following is a 356-amino-acid chain: 3-dehydroquinate synthase (356 aa).

NAD(+) contacts are provided by residues 71 to 76, 105 to 109, 129 to 130, lysine 142, and lysine 151; these read EGEASK, GVTGD, and TS. Zn(2+) contacts are provided by glutamate 184, histidine 247, and histidine 264.

It belongs to the sugar phosphate cyclases superfamily. Dehydroquinate synthase family. Co(2+) serves as cofactor. The cofactor is Zn(2+). NAD(+) is required as a cofactor.

It is found in the cytoplasm. It catalyses the reaction 7-phospho-2-dehydro-3-deoxy-D-arabino-heptonate = 3-dehydroquinate + phosphate. Its pathway is metabolic intermediate biosynthesis; chorismate biosynthesis; chorismate from D-erythrose 4-phosphate and phosphoenolpyruvate: step 2/7. Functionally, catalyzes the conversion of 3-deoxy-D-arabino-heptulosonate 7-phosphate (DAHP) to dehydroquinate (DHQ). The polypeptide is 3-dehydroquinate synthase (Lactococcus lactis subsp. cremoris (strain MG1363)).